The primary structure comprises 359 residues: DNA replication and repair protein RecF (359 aa).

Residue 30-37 coordinates ATP; sequence GKNGIGKT.

This sequence belongs to the RecF family.

The protein localises to the cytoplasm. Functionally, the RecF protein is involved in DNA metabolism; it is required for DNA replication and normal SOS inducibility. RecF binds preferentially to single-stranded, linear DNA. It also seems to bind ATP. The sequence is that of DNA replication and repair protein RecF from Flavobacterium johnsoniae (strain ATCC 17061 / DSM 2064 / JCM 8514 / BCRC 14874 / CCUG 350202 / NBRC 14942 / NCIMB 11054 / UW101) (Cytophaga johnsonae).